The chain runs to 343 residues: Tribbles homolog 2 (343 aa).

Residues 25-50 (EELSSIRSAEPSQSFSPNLGSPSPPE) form a disordered region. Residues 29-45 (SIRSAEPSQSFSPNLGS) show a composition bias toward polar residues. A Protein kinase domain is found at 61 to 308 (IGKYLLLEPL…SQEILDHPWF (248 aa)).

The protein belongs to the protein kinase superfamily. CAMK Ser/Thr protein kinase family. Tribbles subfamily. Highly expressed in the thyroid, also present in ovary and cerebrum.

It localises to the cytoplasm. The protein resides in the cytoskeleton. In terms of biological role, interacts with MAPK kinases and regulates activation of MAP kinases. Does not display kinase activity. The polypeptide is Tribbles homolog 2 (Canis lupus familiaris (Dog)).